The chain runs to 294 residues: Putative HTH-type transcriptional regulatory protein STK_12680 (294 aa).

The 53-residue stretch at 123-175 (LKKKREEMGLSLGEVAQALGVSRISIYDYEREDSYVSIDIAEKLVELFGDDIL) folds into the HTH cro/C1-type domain. The H-T-H motif DNA-binding region spans 134–153 (LGEVAQALGVSRISIYDYER).

The sequence is that of Putative HTH-type transcriptional regulatory protein STK_12680 from Sulfurisphaera tokodaii (strain DSM 16993 / JCM 10545 / NBRC 100140 / 7) (Sulfolobus tokodaii).